We begin with the raw amino-acid sequence, 141 residues long: MKTARRRSRELAVQAVYQSLINRTAAPEIAKNIREMPDFAKADEELFNKLFFGTQTNAAEYIRQIRPLLDRDEKDLNPIERAVLLTACHELSAMPETPYPVIINEAIEVTKTFGGTDGHKFVNGILDKLAAQIRPDEPKRR.

This sequence belongs to the NusB family.

Functionally, involved in transcription antitermination. Required for transcription of ribosomal RNA (rRNA) genes. Binds specifically to the boxA antiterminator sequence of the ribosomal RNA (rrn) operons. This is Transcription antitermination protein NusB from Neisseria meningitidis serogroup A / serotype 4A (strain DSM 15465 / Z2491).